Here is a 407-residue protein sequence, read N- to C-terminus: Argininosuccinate synthase (407 aa).

Residues 12–20 (AYSGGLDTS) and Ala39 contribute to the ATP site. L-citrulline-binding residues include Tyr92 and Ser97. An ATP-binding site is contributed by Gly122. Residues Thr124, Asn128, and Asp129 each coordinate L-aspartate. Asn128 contacts L-citrulline. The L-citrulline site is built by Arg132, Ser183, Ser192, Glu268, and Tyr280.

It belongs to the argininosuccinate synthase family. Type 1 subfamily. Homotetramer.

The protein resides in the cytoplasm. The enzyme catalyses L-citrulline + L-aspartate + ATP = 2-(N(omega)-L-arginino)succinate + AMP + diphosphate + H(+). It functions in the pathway amino-acid biosynthesis; L-arginine biosynthesis; L-arginine from L-ornithine and carbamoyl phosphate: step 2/3. The sequence is that of Argininosuccinate synthase from Caulobacter sp. (strain K31).